A 245-amino-acid polypeptide reads, in one-letter code: 1-(5-phosphoribosyl)-5-[(5-phosphoribosylamino)methylideneamino] imidazole-4-carboxamide isomerase (245 aa).

Asp-8 functions as the Proton acceptor in the catalytic mechanism. Asp-129 acts as the Proton donor in catalysis.

This sequence belongs to the HisA/HisF family.

It is found in the cytoplasm. It carries out the reaction 1-(5-phospho-beta-D-ribosyl)-5-[(5-phospho-beta-D-ribosylamino)methylideneamino]imidazole-4-carboxamide = 5-[(5-phospho-1-deoxy-D-ribulos-1-ylimino)methylamino]-1-(5-phospho-beta-D-ribosyl)imidazole-4-carboxamide. The protein operates within amino-acid biosynthesis; L-histidine biosynthesis; L-histidine from 5-phospho-alpha-D-ribose 1-diphosphate: step 4/9. This Rhodopseudomonas palustris (strain ATCC BAA-98 / CGA009) protein is 1-(5-phosphoribosyl)-5-[(5-phosphoribosylamino)methylideneamino] imidazole-4-carboxamide isomerase.